Reading from the N-terminus, the 323-residue chain is Cysteine synthase A (323 aa).

Residues Asn-8 and Arg-35 each contribute to the hydrogen sulfide site. Lys-42 carries the post-translational modification N6-(pyridoxal phosphate)lysine. Pyridoxal 5'-phosphate-binding positions include Asn-72 and 177-181 (GTGGT). Leu-269 provides a ligand contact to hydrogen sulfide. Residue Ser-273 participates in pyridoxal 5'-phosphate binding.

This sequence belongs to the cysteine synthase/cystathionine beta-synthase family. In terms of assembly, homodimer. Pyridoxal 5'-phosphate is required as a cofactor.

It catalyses the reaction O-acetyl-L-serine + hydrogen sulfide = L-cysteine + acetate. The protein operates within amino-acid biosynthesis; L-cysteine biosynthesis; L-cysteine from L-serine: step 2/2. In terms of biological role, two cysteine synthase enzymes are found. Both catalyze the same reaction. Cysteine synthase B can also use thiosulfate in place of sulfide to give cysteine thiosulfonate as a product. The protein is Cysteine synthase A (cysK) of Salmonella typhi.